The following is a 399-amino-acid chain: G2/mitotic-specific cyclin-B2 (399 aa).

The tract at residues 58-78 is disordered; sequence PVKATKGPGKMTNTVVPPKPP.

It belongs to the cyclin family. Cyclin AB subfamily. As to quaternary structure, interacts with the CDK1 protein kinase to form a serine/threonine kinase holoenzyme complex also known as maturation promoting factor (MPF). The cyclin subunit imparts substrate specificity to the complex.

In terms of biological role, essential for the control of the cell cycle at the G2/M (mitosis) transition. The sequence is that of G2/mitotic-specific cyclin-B2 (CCNB2) from Gallus gallus (Chicken).